A 192-amino-acid polypeptide reads, in one-letter code: Pyridoxal 5'-phosphate synthase subunit PdxT (192 aa).

50-52 serves as a coordination point for L-glutamine; the sequence is GES. C82 serves as the catalytic Nucleophile. L-glutamine is bound by residues R109 and 136–137; that span reads IR. Active-site charge relay system residues include H172 and E174.

The protein belongs to the glutaminase PdxT/SNO family. As to quaternary structure, in the presence of PdxS, forms a dodecamer of heterodimers. Only shows activity in the heterodimer.

The catalysed reaction is aldehydo-D-ribose 5-phosphate + D-glyceraldehyde 3-phosphate + L-glutamine = pyridoxal 5'-phosphate + L-glutamate + phosphate + 3 H2O + H(+). It carries out the reaction L-glutamine + H2O = L-glutamate + NH4(+). Its pathway is cofactor biosynthesis; pyridoxal 5'-phosphate biosynthesis. Catalyzes the hydrolysis of glutamine to glutamate and ammonia as part of the biosynthesis of pyridoxal 5'-phosphate. The resulting ammonia molecule is channeled to the active site of PdxS. This is Pyridoxal 5'-phosphate synthase subunit PdxT from Haemophilus influenzae (strain PittGG).